The primary structure comprises 84 residues: Putative membrane protein insertion efficiency factor (84 aa).

The segment at 63 to 84 is disordered; it reads GEDPVPNHFTLRRNKKEKPSKS.

Belongs to the UPF0161 family.

It localises to the cell membrane. In terms of biological role, could be involved in insertion of integral membrane proteins into the membrane. The polypeptide is Putative membrane protein insertion efficiency factor (Streptococcus mutans serotype c (strain ATCC 700610 / UA159)).